Consider the following 246-residue polypeptide: Exosome complex component Rrp41 (246 aa).

This sequence belongs to the RNase PH family. Rrp41 subfamily. Component of the archaeal exosome complex. Forms a hexameric ring-like arrangement composed of 3 Rrp41-Rrp42 heterodimers. The hexameric ring associates with a trimer of Rrp4 and/or Csl4 subunits.

Its subcellular location is the cytoplasm. Its function is as follows. Catalytic component of the exosome, which is a complex involved in RNA degradation. Has 3'-&gt;5' exoribonuclease activity. Can also synthesize heteromeric RNA-tails. The polypeptide is Exosome complex component Rrp41 (Pyrobaculum calidifontis (strain DSM 21063 / JCM 11548 / VA1)).